Here is an 83-residue protein sequence, read N- to C-terminus: Small integral membrane protein 10 (83 aa).

A helical membrane pass occupies residues 64–82 (FFYFYILASVILNVHLQVY).

The protein resides in the membrane. This chain is Small integral membrane protein 10 (SMIM10), found in Homo sapiens (Human).